The sequence spans 263 residues: Taurine import ATP-binding protein TauB (263 aa).

Residues 4-235 form the ABC transporter domain; that stretch reads LTAEAISLSF…RYAAGETVRS (232 aa). 40-47 contributes to the ATP binding site; sequence GPSGCGKS.

It belongs to the ABC transporter superfamily. Taurine importer (TC 3.A.1.17.1) family. The complex is composed of two ATP-binding proteins (TauB), two transmembrane proteins (TauC) and a solute-binding protein (TauA).

The protein localises to the cell inner membrane. It carries out the reaction taurine(out) + ATP + H2O = taurine(in) + ADP + phosphate + H(+). In terms of biological role, part of the ABC transporter complex TauABC involved in taurine import. Responsible for energy coupling to the transport system. The protein is Taurine import ATP-binding protein TauB of Pseudomonas aeruginosa (strain ATCC 15692 / DSM 22644 / CIP 104116 / JCM 14847 / LMG 12228 / 1C / PRS 101 / PAO1).